Here is a 234-residue protein sequence, read N- to C-terminus: Endonuclease V (234 aa).

Mg(2+) is bound by residues Asp36 and Asp104.

Belongs to the endonuclease V family. Requires Mg(2+) as cofactor.

It localises to the cytoplasm. It catalyses the reaction Endonucleolytic cleavage at apurinic or apyrimidinic sites to products with a 5'-phosphate.. In terms of biological role, DNA repair enzyme involved in the repair of deaminated bases. Selectively cleaves double-stranded DNA at the second phosphodiester bond 3' to a deoxyinosine leaving behind the intact lesion on the nicked DNA. This chain is Endonuclease V, found in Yersinia pestis.